The primary structure comprises 62 residues: ATP synthase subunit epsilon, mitochondrial (62 aa).

Thr-52 bears the Phosphothreonine mark.

It belongs to the eukaryotic ATPase epsilon family. As to quaternary structure, F-type ATPases have 2 components, CF(1) - the catalytic core - and CF(0) - the membrane proton channel. CF(1) has five subunits: alpha(3), beta(3), gamma(1), delta(1), epsilon(1). CF(0) has three main subunits: a, b and c.

Its subcellular location is the mitochondrion. It localises to the mitochondrion inner membrane. In terms of biological role, mitochondrial membrane ATP synthase (F(1)F(0) ATP synthase or Complex V) produces ATP from ADP in the presence of a proton gradient across the membrane which is generated by electron transport complexes of the respiratory chain. F-type ATPases consist of two structural domains, F(1) - containing the extramembraneous catalytic core, and F(0) - containing the membrane proton channel, linked together by a central stalk and a peripheral stalk. During catalysis, ATP synthesis in the catalytic domain of F(1) is coupled via a rotary mechanism of the central stalk subunits to proton translocation. Part of the complex F(1) domain and of the central stalk which is part of the complex rotary element. Rotation of the central stalk against the surrounding alpha(3)beta(3) subunits leads to hydrolysis of ATP in three separate catalytic sites on the beta subunits. The sequence is that of ATP synthase subunit epsilon, mitochondrial (ATP15) from Saccharomyces cerevisiae (strain ATCC 204508 / S288c) (Baker's yeast).